Consider the following 125-residue polypeptide: Large ribosomal subunit protein uL22 (125 aa).

The protein belongs to the universal ribosomal protein uL22 family. In terms of assembly, part of the 50S ribosomal subunit.

Its function is as follows. This protein binds specifically to 23S rRNA; its binding is stimulated by other ribosomal proteins, e.g. L4, L17, and L20. It is important during the early stages of 50S assembly. It makes multiple contacts with different domains of the 23S rRNA in the assembled 50S subunit and ribosome. The globular domain of the protein is located near the polypeptide exit tunnel on the outside of the subunit, while an extended beta-hairpin is found that lines the wall of the exit tunnel in the center of the 70S ribosome. The chain is Large ribosomal subunit protein uL22 from Novosphingobium aromaticivorans (strain ATCC 700278 / DSM 12444 / CCUG 56034 / CIP 105152 / NBRC 16084 / F199).